The sequence spans 343 residues: Tumor necrosis factor receptor superfamily member wgn (343 aa).

2 disordered regions span residues 1–44 and 74–96; these read MMPP…IGGS and SSAA…SIAS. An N-terminal signal peptide occupies residues 1-76; the sequence is MMPPRLPGGH…ATSASSSSSA (76 aa). Positions 13-24 are enriched in low complexity; it reads AMRSRSSSSGHH. Positions 29–39 are enriched in basic residues; that stretch reads FHKRRRRRQQH. At 77-201 the chain is on the extracellular side; that stretch reads ANTDIAPPDP…AAWVLDWQTG (125 aa). A TNFR-Cys repeat occupies 99 to 137; it reads PCAPQHWWDSQRDRCTPCTRCQGEMIPLRPCQLHTDTIC. 3 cysteine pairs are disulfide-bonded: C100-C113, C116-C129, and C119-C137. Residues 202 to 222 traverse the membrane as a helical segment; the sequence is VLYVAVLTCLVFFSVAACILI. The Cytoplasmic portion of the chain corresponds to 223–343; sequence HHMRQWRRME…GVRGCSGLKG (121 aa). A coiled-coil region spans residues 225–257; that stretch reads MRQWRRMERRLDQDVEELSTKLMAKLAEVQSLD.

Monomer. Interacts (via extracellular cystein-rich domain) with egr (via secreted TNF-homology soluble form); forms heterohexamers when 3 copies associate with egr trimers. Interacts with Traf6. Interacts with Moe. Expressed in the adult midgut; under normal conditions expressed at higher levels than the other TNF receptor grnd.

The protein localises to the cell membrane. It localises to the cytoplasmic vesicle membrane. In terms of biological role, receptor for egr. Involved in induction of apoptosis by triggering JNK signaling. Mediates the tumor suppressor activity of egr which eliminates oncogenic cells from epithelia, thereby maintaining epithelial integrity. Following UV-induced epidermal damage, binds to egr released from apoptotic epidermal cells and plays a role in development of thermal allodynia, a responsiveness to subthreshold thermal stimuli which are not normally perceived as noxious. Together with Moe, involved in control of axon targeting of R8 and R2-R5 photoreceptors, independent of egr. This chain is Tumor necrosis factor receptor superfamily member wgn, found in Drosophila melanogaster (Fruit fly).